The following is a 180-amino-acid chain: Nucleoside triphosphate/diphosphate phosphatase (180 aa).

Arg-26 functions as the Proton donor in the catalytic mechanism. 6 residues coordinate Mg(2+): Asn-90, Asp-106, Asp-108, Asp-110, Asp-123, and Glu-126.

It belongs to the Ntdp family. The cofactor is Mg(2+).

The catalysed reaction is a ribonucleoside 5'-triphosphate + H2O = a ribonucleoside 5'-diphosphate + phosphate + H(+). It catalyses the reaction a ribonucleoside 5'-diphosphate + H2O = a ribonucleoside 5'-phosphate + phosphate + H(+). In terms of biological role, has nucleoside phosphatase activity towards nucleoside triphosphates and nucleoside diphosphates. The protein is Nucleoside triphosphate/diphosphate phosphatase of Staphylococcus haemolyticus (strain JCSC1435).